The sequence spans 110 residues: Large ribosomal subunit protein uL22 (110 aa).

The protein belongs to the universal ribosomal protein uL22 family. Part of the 50S ribosomal subunit.

This protein binds specifically to 23S rRNA; its binding is stimulated by other ribosomal proteins, e.g. L4, L17, and L20. It is important during the early stages of 50S assembly. It makes multiple contacts with different domains of the 23S rRNA in the assembled 50S subunit and ribosome. Its function is as follows. The globular domain of the protein is located near the polypeptide exit tunnel on the outside of the subunit, while an extended beta-hairpin is found that lines the wall of the exit tunnel in the center of the 70S ribosome. The chain is Large ribosomal subunit protein uL22 from Marinobacter nauticus (strain ATCC 700491 / DSM 11845 / VT8) (Marinobacter aquaeolei).